The sequence spans 454 residues: tRNA modification GTPase MnmE (454 aa).

The (6S)-5-formyl-5,6,7,8-tetrahydrofolate site is built by Arg-23, Glu-80, and Lys-120. Residues 216 to 377 enclose the TrmE-type G domain; that stretch reads GMKVVIAGRP…LRNHLKQSMG (162 aa). Asn-226 is a K(+) binding site. Residues 226 to 231, 245 to 251, 270 to 273, 335 to 338, and 358 to 360 each bind GTP; these read NAGKSS, TDIAGTT, DTAG, NKAD, and SAR. Mg(2+) is bound at residue Ser-230. K(+)-binding residues include Thr-245, Ile-247, and Thr-250. Thr-251 contributes to the Mg(2+) binding site. Lys-454 serves as a coordination point for (6S)-5-formyl-5,6,7,8-tetrahydrofolate.

Belongs to the TRAFAC class TrmE-Era-EngA-EngB-Septin-like GTPase superfamily. TrmE GTPase family. Homodimer. Heterotetramer of two MnmE and two MnmG subunits. It depends on K(+) as a cofactor.

The protein resides in the cytoplasm. Its function is as follows. Exhibits a very high intrinsic GTPase hydrolysis rate. Involved in the addition of a carboxymethylaminomethyl (cmnm) group at the wobble position (U34) of certain tRNAs, forming tRNA-cmnm(5)s(2)U34. In Klebsiella pneumoniae subsp. pneumoniae (strain ATCC 700721 / MGH 78578), this protein is tRNA modification GTPase MnmE.